The chain runs to 507 residues: Subtilisin-like protease 1 (507 aa).

The N-terminal stretch at 1 to 19 (MGVFRFISISLAAVSAANA) is a signal peptide. Residues 20–116 (AQILSMPHAQ…VEPDTIISVN (97 aa)) constitute a propeptide that is removed on maturation. In terms of domain architecture, Inhibitor I9 spans 34–113 (SYIVMMKDDT…VMFVEPDTII (80 aa)). The Peptidase S8 domain maps to 126–400 (SWGLARISNS…NVLISNGGAK (275 aa)). Residues Asp158 and His190 each act as charge relay system in the active site. Residues 175 to 198 (GSNQVNDGDDRDGSGHGTHTSGTM) form a disordered region. Residue Asn251 is glycosylated (N-linked (GlcNAc...) asparagine). The segment covering 282-294 (NENQDARSSSPAS) has biased composition (polar residues). Residues 282-312 (NENQDARSSSPASEPSVCTVGSSAEDDSRSS) form a disordered region. Residue Ser345 is the Charge relay system of the active site. The segment covering 378-394 (SSSITDVGPGTPTNVLI) has biased composition (polar residues). A disordered region spans residues 378-486 (SSSITDVGPG…YPGGDNFDFD (109 aa)). Composition is skewed to pro residues over residues 405 to 428 (KPAPGPSPNPSQPSEPQQPAPSQP) and 438 to 449 (EPFPGEPFPGEP). The segment covering 450 to 461 (FPGESSPGESAP) has biased composition (low complexity). Residues 462 to 476 (APAPMPPSPQHPHTP) show a composition bias toward pro residues.

This sequence belongs to the peptidase S8 family.

It localises to the secreted. In terms of biological role, secreted subtilisin-like serine protease with keratinolytic activity that contributes to pathogenicity. This chain is Subtilisin-like protease 1 (SUB1), found in Trichophyton equinum (Horse ringworm fungus).